The following is a 118-amino-acid chain: LYR motif containing protein 1 (118 aa).

A disordered region spans residues 91–118; the sequence is TQKGRKLRAQQRLRKQAKPVYLQSQDET. A compositionally biased stretch (basic residues) spans 93-107; the sequence is KGRKLRAQQRLRKQA.

This sequence belongs to the complex I LYR family.

This Danio rerio (Zebrafish) protein is LYR motif containing protein 1 (lyrm1).